The sequence spans 233 residues: 5'-methylthioadenosine/S-adenosylhomocysteine nucleosidase (233 aa).

Glu-12 (proton acceptor) is an active-site residue. Residues Gly-78, Ile-152, and 173-174 (ME) each bind substrate. The active-site Proton donor is the Asp-197.

It belongs to the PNP/UDP phosphorylase family. MtnN subfamily. As to quaternary structure, homodimer.

It carries out the reaction S-adenosyl-L-homocysteine + H2O = S-(5-deoxy-D-ribos-5-yl)-L-homocysteine + adenine. It catalyses the reaction S-methyl-5'-thioadenosine + H2O = 5-(methylsulfanyl)-D-ribose + adenine. The catalysed reaction is 5'-deoxyadenosine + H2O = 5-deoxy-D-ribose + adenine. It participates in amino-acid biosynthesis; L-methionine biosynthesis via salvage pathway; S-methyl-5-thio-alpha-D-ribose 1-phosphate from S-methyl-5'-thioadenosine (hydrolase route): step 1/2. Functionally, catalyzes the irreversible cleavage of the glycosidic bond in both 5'-methylthioadenosine (MTA) and S-adenosylhomocysteine (SAH/AdoHcy) to adenine and the corresponding thioribose, 5'-methylthioribose and S-ribosylhomocysteine, respectively. Also cleaves 5'-deoxyadenosine, a toxic by-product of radical S-adenosylmethionine (SAM) enzymes, into 5-deoxyribose and adenine. Thus, is required for in vivo function of the radical SAM enzymes biotin synthase and lipoic acid synthase, that are inhibited by 5'-deoxyadenosine accumulation. The sequence is that of 5'-methylthioadenosine/S-adenosylhomocysteine nucleosidase from Yersinia enterocolitica serotype O:8 / biotype 1B (strain NCTC 13174 / 8081).